The primary structure comprises 393 residues: Elongation factor Tu (393 aa).

The tr-type G domain occupies 10–203 (KPHVNIGTIG…AVDSYIPEPV (194 aa)). Positions 19 to 26 (GHVDHGKT) are G1. GTP is bound at residue 19–26 (GHVDHGKT). Thr-26 serves as a coordination point for Mg(2+). The G2 stretch occupies residues 60–64 (GITIS). The tract at residues 81 to 84 (DCPG) is G3. GTP contacts are provided by residues 81–85 (DCPGH) and 136–139 (NKVD). A G4 region spans residues 136–139 (NKVD). The segment at 173 to 175 (SAL) is G5.

The protein belongs to the TRAFAC class translation factor GTPase superfamily. Classic translation factor GTPase family. EF-Tu/EF-1A subfamily. As to quaternary structure, monomer.

Its subcellular location is the cytoplasm. It catalyses the reaction GTP + H2O = GDP + phosphate + H(+). In terms of biological role, GTP hydrolase that promotes the GTP-dependent binding of aminoacyl-tRNA to the A-site of ribosomes during protein biosynthesis. The protein is Elongation factor Tu of Prosthecochloris aestuarii (strain DSM 271 / SK 413).